Consider the following 752-residue polypeptide: Pentatricopeptide repeat-containing protein At5g13270, chloroplastic (752 aa).

The N-terminal 80 residues, 1-80 (MTILTVQSSF…LQEMDKAGVS (80 aa)), are a transit peptide targeting the chloroplast. PPR repeat units lie at residues 47–81 (QGQV…GVSV), 82–116 (SSYS…IENP), 117–147 (SVLL…MSEL), 148–182 (NAVS…GDKP), 183–217 (PSSM…GLCS), 218–248 (NTSI…MAVK), 249–283 (KPVA…GVEW), 284–318 (DSFV…GLES), 319–349 (EVSV…IREP), 350–384 (NDVS…NASI), 386–420 (NSFT…SLIG), 421–451 (SQYG…MDNP), 452–486 (DIVA…GMKP), 487–522 (NSVT…NVAP), and 523–553 (TIDH…MPFE). A type E motif region spans residues 558-633 (SWKCFLSGCW…ELSCSWIQEK (76 aa)). The type E(+) motif stretch occupies residues 634-664 (GKIHRFIVGDKHHPQTQEIYEKLKEFDGFME). The type DYW motif stretch occupies residues 665–752 (GDMFQCNMTE…EGKCSCNDYW (88 aa)).

Belongs to the PPR family. PCMP-H subfamily.

It is found in the plastid. The protein resides in the chloroplast. This Arabidopsis thaliana (Mouse-ear cress) protein is Pentatricopeptide repeat-containing protein At5g13270, chloroplastic (PCMP-H90).